The primary structure comprises 1191 residues: DNA-directed RNA polymerase subunit beta (1191 aa).

Residues 1164–1191 (EEEDLQPADALNIAPQPDTEEEPVESFE) form a disordered region. The span at 1181-1191 (DTEEEPVESFE) shows a compositional bias: acidic residues.

The protein belongs to the RNA polymerase beta chain family. In terms of assembly, the RNAP catalytic core consists of 2 alpha, 1 beta, 1 beta' and 1 omega subunit. When a sigma factor is associated with the core the holoenzyme is formed, which can initiate transcription.

The catalysed reaction is RNA(n) + a ribonucleoside 5'-triphosphate = RNA(n+1) + diphosphate. Functionally, DNA-dependent RNA polymerase catalyzes the transcription of DNA into RNA using the four ribonucleoside triphosphates as substrates. This Lysinibacillus sphaericus (strain C3-41) protein is DNA-directed RNA polymerase subunit beta.